Here is a 1442-residue protein sequence, read N- to C-terminus: ABC transporter G family member 11 (1442 aa).

The 249-residue stretch at 125-373 (LFTPSFWTKK…FMSLGFDCEP (249 aa)) folds into the ABC transporter 1 domain. Residues 478–718 (LNDKFGMYSK…EQGSLYFKGD (241 aa)) form the ABC transmembrane type-2 1 domain. Transmembrane regions (helical) follow at residues 482–502 (FGMY…ASLF), 518–538 (AILS…AMTF), 567–587 (IPFT…MFGL), 592–612 (GKFF…TALF), 627–647 (NISN…IPIP), and 737–757 (IIVY…MEYI). Positions 808 to 1052 (FTWQNIRYTV…LTSYFERHGV (245 aa)) constitute an ABC transporter 2 domain. ATP is bound at residue 844 to 851 (GSSGAGKT). One can recognise an ABC transmembrane type-2 2 domain in the interval 1144–1369 (YYTYGSFVQA…YNTCQNYTSA (226 aa)). Transmembrane regions (helical) follow at residues 1147 to 1167 (YGSF…FWNL), 1181 to 1201 (IFEA…QLII), 1220 to 1240 (FAIS…TIFF), 1259 to 1279 (FYFW…GQAV), 1286 to 1306 (MFFA…FCGV), and 1416 to 1436 (VGII…FVYL).

It belongs to the ABC transporter superfamily. ABCG family. PDR (TC 3.A.1.205) subfamily.

It is found in the membrane. The chain is ABC transporter G family member 11 (abcG11) from Dictyostelium discoideum (Social amoeba).